Reading from the N-terminus, the 341-residue chain is O(6)-methylguanine-induced apoptosis 2 (341 aa).

Positions 1-10 (MSQKFANTGS) are enriched in polar residues. Positions 1–23 (MSQKFANTGSFIEREDLGKPNKG) are disordered. Residues 12–23 (IEREDLGKPNKG) are compositionally biased toward basic and acidic residues. STPGR repeat units lie at residues 73–80 (PGPGFYNV), 115–123 (PAANAYTIR), 154–160 (PAPNHYN), 194–213 (GPAP…SPKV), 232–254 (GPGP…HLPK), 273–284 (LPGPGQYEIVNY), and 313–323 (LPGPASYKPEI). The residue at position 78 (tyrosine 78) is a Phosphotyrosine.

Belongs to the STPG1 family.

Its subcellular location is the cytoplasm. It localises to the nucleus. May positively contribute to the induction of apoptosis triggered by O(6)-methylguanine. In Rattus norvegicus (Rat), this protein is O(6)-methylguanine-induced apoptosis 2 (Stpg1).